A 234-amino-acid chain; its full sequence is Ribosome-inactivating protein lychnin (234 aa).

A disulfide bridge connects residues cysteine 32 and cysteine 115. The active site involves glutamate 170.

In terms of assembly, monomer.

The catalysed reaction is Endohydrolysis of the N-glycosidic bond at one specific adenosine on the 28S rRNA.. Ribosome-inactivating protein of type 1, inhibits protein synthesis in animal cells. Inhibits cell-free translation in rabbit reticulocyte lysate system with an IC(50) of 0.17 nM. This is Ribosome-inactivating protein lychnin from Silene chalcedonica (Maltese-cross).